Reading from the N-terminus, the 149-residue chain is Probable conjugal transfer protein TrbE part 1 (149 aa).

This sequence belongs to the TrbE/VirB4 family.

In Sinorhizobium fredii (strain NBRC 101917 / NGR234), this protein is Probable conjugal transfer protein TrbE part 1 (trbEA).